A 105-amino-acid chain; its full sequence is Endogenous retrovirus group K member 104 Rec protein (105 aa).

Residues 1–43 (MNPSEMQRKAPPRRRRHCNRAPLTHKMNKMVTSEEEMKLPSTK) form a disordered region. Positions 10 to 19 (APPRRRRHCN) are enriched in basic residues. Positions 13-20 (RRRRHCNR) match the Nuclear localization signal motif. The short motif at 50–59 (WAQLKKLTQL) is the Nuclear export signal element.

In terms of assembly, forms homodimers, homotrimers, and homotetramers via a C-terminal domain. Associates with XPO1 and with ZNF145.

The protein resides in the cytoplasm. Its subcellular location is the nucleus. It is found in the nucleolus. Functionally, retroviral replication requires the nuclear export and translation of unspliced, singly-spliced and multiply-spliced derivatives of the initial genomic transcript. Rec interacts with a highly structured RNA element (RcRE) present in the viral 3'LTR and recruits the cellular nuclear export machinery. This permits export to the cytoplasm of unspliced genomic or incompletely spliced subgenomic viral transcripts. The polypeptide is Endogenous retrovirus group K member 104 Rec protein (HERV-K104) (Homo sapiens (Human)).